Consider the following 614-residue polypeptide: ETS-related transcription factor Elf-1 (614 aa).

Residues serine 110, serine 163, serine 167, and serine 168 each carry the phosphoserine modification. The tract at residues 159 to 199 is disordered; sequence TYAHSPGPSSPEQPKRKKGRKTKPPRPDSPTTTPNISVKKK. Over residues 173 to 182 the composition is skewed to basic residues; sequence KRKKGRKTKP. Position 187 is a phosphoserine (serine 187). Threonine 190 is modified (phosphothreonine). Residues 208–290 constitute a DNA-binding region (ETS); that stretch reads IYLWEFLLAL…EGQRLVYQFK (83 aa). Residues 303–371 are disordered; it reads DPSCSIESSD…VQPSEALRTV (69 aa). Over residues 310–335 the composition is skewed to low complexity; the sequence is SSDPSLSSTATSSRNPASRSRASSSP. Residue serine 430 is modified to Phosphoserine.

It belongs to the ETS family. As to quaternary structure, binds to the underphosphorylated form of RB. May interact with other transcription factors in order to regulate specific genes. Interacts with RUNX1.

The protein resides in the nucleus. Its function is as follows. Transcription factor that activates the LYN and BLK promoters. This is ETS-related transcription factor Elf-1 (ELF1) from Bos taurus (Bovine).